A 139-amino-acid chain; its full sequence is Nucleoside diphosphate kinase (139 aa).

6 residues coordinate ATP: K10, F58, R86, T92, R103, and N113. H116 acts as the Pros-phosphohistidine intermediate in catalysis.

The protein belongs to the NDK family. In terms of assembly, homotetramer. It depends on Mg(2+) as a cofactor.

It localises to the cytoplasm. The enzyme catalyses a 2'-deoxyribonucleoside 5'-diphosphate + ATP = a 2'-deoxyribonucleoside 5'-triphosphate + ADP. It carries out the reaction a ribonucleoside 5'-diphosphate + ATP = a ribonucleoside 5'-triphosphate + ADP. Functionally, major role in the synthesis of nucleoside triphosphates other than ATP. The ATP gamma phosphate is transferred to the NDP beta phosphate via a ping-pong mechanism, using a phosphorylated active-site intermediate. This Nitratidesulfovibrio vulgaris (strain ATCC 29579 / DSM 644 / CCUG 34227 / NCIMB 8303 / VKM B-1760 / Hildenborough) (Desulfovibrio vulgaris) protein is Nucleoside diphosphate kinase.